Here is an 84-residue protein sequence, read N- to C-terminus: MKFLDFFRANKKPSTASVAKERLQIIVAHERGQRSTPDYLPALQKELVEVIRKYVNIGNDDVHVALENDGSCSILELNITLPDR.

Belongs to the MinE family.

In terms of biological role, prevents the cell division inhibition by proteins MinC and MinD at internal division sites while permitting inhibition at polar sites. This ensures cell division at the proper site by restricting the formation of a division septum at the midpoint of the long axis of the cell. In Pseudomonas fluorescens (strain SBW25), this protein is Cell division topological specificity factor.